A 1813-amino-acid chain; its full sequence is MQLPFYVEALASNPKLLMKQHGQHATLSLHAVHIQCSGFMDILDSILKNTDQTIGQAMQLGDRELQQLWKWNASVPQTLDDCIHDIFVEKARRDPSRQAVVSWDGELSYGEVDQFSTLLAIHLIKLGVKFGNHVLLCFEKSMWTVVAVLAVMKSGGTLVLTDPSQPEARLQTIATEVGANLMLTSERQEELGKRILAGGVIVVNHDFFQQIQTSVLPPASTTDLPSVPGSSPLYTIFTSGSTGKPKGVVISHANYTSGALPRAEAVGYGPHSRVLDFPSYAFDVSIDCMLCTLAHGGCVCVPSEDDRVNNLSGAIRNMKVNMAHMTPSVARVLGEDTLSSLEVLGLGGESVSVRDAANWGKLTKVIIAYGPSECTVGCTINNEIALDRAYTSIGKGVGGVTWVVDPTDHSRLMPIGAIGELIIEGPIVGRGYLNDPERTSSVFIEDPMWLLSGCQGYPGRHGRFYKTGDLVKYDPDSSGSIVFVGRGDQQVKLRGQRVELGEVEHHLRTRLPAGNVVAAEVITPGGKGDQPTLVAFIAEKTTTKSQTNKEIATFSTELRHSLEVMDKALGSVLPRYMVPSAYIPLLEMPLLVSCKVDRKKLRSLGSAMSRKELIRHKTFSSQKEPQSERERQLAHLWKCLFGAEAEIDVQSNFFDLGGDSLMAMKLVAAARAENLLTSVADIFRHPTLAELAITLKHSDSEAEIDVPPFSLLDSHWKENNARIETAKLCGIDATSVMDVYPCTTLQEGLMALSAKVSEAYVAQRVVELADFQTAQRLQRAFETAAADSPILRTRIVQVPGRGLMQVVLKDGITWRAGTTLEEYLVKDRNESMGLGTPLARFAITSNETTGKVHFVLTIHHALYDGWSMPLVVRRVNRAFNNQESERSVAFNSFIKHLSGLNHKDSEIYWKEQLQGANGLQFPALPRAGYQTQAQSLLEQYFPLGKTSASSTSIATSIRAAWALVAGKYTLSDDVVFGETLTGRNAPVVGIEKIEGPMITTVPVRVRFDRNARVSEYLRRIHDDSILRIPHEHMGLQHIRRLSPDAREACELRTGIVIHPTTTEDGKNLTGDGPANGFVPAGDEDAAREALKFNTYALMLVCSLDPKGFLVMASFDSATIDVCQMDKVLGQFGQTVQQLCENGNALVSDLLPMTDDELAEIWRFSNTYKPNSGNEVVLGHDYSHATATWIVAPEDSEQLVPLGGIGELVIEGDFPTNTSIQISGTKWLSAGHRDIPGRQATLHKTGQLAKYNSDGSLVILGGKGGNIKSDMEIKKPEAKSRSQVTTPKQQKLRKLWARVLGISEDEVGSNDSFFDLGGDSISAMKLVSEGRMENLELVVMQVFQHRRFHDMADIAKESLPLQVSTKQYSPFSTLDVSDVDTFISESIRPSLLNSSWKVVDVLPARPLQEIAVDGTINLPRYSARYELFYLDAAVDQSHLLKSCQELISRNEILRTIFVKSGGSCFGVVIEELQLPLDEYQIDGDLTAFAEQLCGLDIQTVMSLGSPFIKFFVVQSSSGLSCLIMRISHAQYDEICLPILLRQLSALYEGELVPAGLPFSSFVHHIVRNNIPQSIEYWRRLLQGSSMSVLRPSTPLISKKSIFISKTFDISSRSKEITLATLPTAAWALCLARRLSLRDVTFGEVVSGRNIDFANCDTVVGPTWQYIPVRVKFKSGWTVIDLLNFVQHQHISSTPFEGIGLKEIVRKCTDWPETTEWFDSVVHQDVEHVESLRFLSANSRMDTIYPHLEPLREWKIQAFPKGDSLCIEIVTFESWRAEADSILNEMGDIISLLVTKPNSTLFQTDVMEESTPPTS.

The interval 89 to 494 is adenylation; sequence EKARRDPSRQ…GRGDQQVKLR (406 aa). The Carrier 1 domain occupies 624–699; that stretch reads EPQSERERQL…ELAITLKHSD (76 aa). At S660 the chain carries O-(pantetheine 4'-phosphoryl)serine. Residues 738 to 1159 form a condensation 1 region; that stretch reads DVYPCTTLQE…LPMTDDELAE (422 aa). The Carrier 2 domain maps to 1282 to 1358; it reads QVTTPKQQKL…DMADIAKESL (77 aa). Position 1319 is an O-(pantetheine 4'-phosphoryl)serine (S1319). The condensation 2 stretch occupies residues 1427–1806; sequence FYLDAAVDQS…STLFQTDVME (380 aa).

This sequence belongs to the NRP synthetase family.

It participates in siderophore biosynthesis. Functionally, nonribosomal peptide synthetase; part of the gene cluster that mediates the biosynthesis of hydroxamate-containing siderophores that play a critical role in virulence via intracellular iron acquisition during macrophage infection. This chain is Nonribosomal peptide synthetase 1, found in Ajellomyces capsulatus (Darling's disease fungus).